Consider the following 253-residue polypeptide: Indole-3-glycerol phosphate synthase (253 aa).

It belongs to the TrpC family.

It catalyses the reaction 1-(2-carboxyphenylamino)-1-deoxy-D-ribulose 5-phosphate + H(+) = (1S,2R)-1-C-(indol-3-yl)glycerol 3-phosphate + CO2 + H2O. It participates in amino-acid biosynthesis; L-tryptophan biosynthesis; L-tryptophan from chorismate: step 4/5. This Bacillus thuringiensis (strain Al Hakam) protein is Indole-3-glycerol phosphate synthase.